The primary structure comprises 74 residues: Exodeoxyribonuclease 7 small subunit (74 aa).

Belongs to the XseB family. Heterooligomer composed of large and small subunits.

It localises to the cytoplasm. It catalyses the reaction Exonucleolytic cleavage in either 5'- to 3'- or 3'- to 5'-direction to yield nucleoside 5'-phosphates.. In terms of biological role, bidirectionally degrades single-stranded DNA into large acid-insoluble oligonucleotides, which are then degraded further into small acid-soluble oligonucleotides. The sequence is that of Exodeoxyribonuclease 7 small subunit from Clostridium botulinum (strain Eklund 17B / Type B).